We begin with the raw amino-acid sequence, 675 residues long: Nexilin (675 aa).

The disordered stretch occupies residues 1–66 (MNDISQKAEI…RKEQYIRERE (66 aa)). Lysine 16 carries the phosphoserine modification. A compositionally biased stretch (basic and acidic residues) spans 27 to 66 (GKGDVKDKFEAMQRAREERNQRRSRDEKQRRKEQYIRERE). Serine 80 carries the post-translational modification Phosphoserine. The interval 105–127 (RFAEMEKQRQEEQRKRTEEERKR) is disordered. Position 241 is a phosphoserine (serine 241). Disordered regions lie at residues 254–278 (LERQ…EEEK) and 313–336 (SFEE…ARRR). Phosphoserine is present on residues serine 357 and serine 365. Threonine 370 is subject to Phosphothreonine. Disordered stretches follow at residues 487-513 (ENFH…KVNM) and 551-584 (LQKK…APWF). A phosphoserine mark is found at serine 564 and serine 569. The Ig-like domain maps to 582–670 (PWFKKPLKNT…GSAASTCILT (89 aa)).

Interacts with F-actin. Abundantly expressed in heart and skeletal muscle, and at lower levels in placenta, lung, liver and pancreas. Also expressed in HeLaS3 and MOLT-4 cell lines.

It localises to the cytoplasm. Its subcellular location is the cytoskeleton. It is found in the cell junction. The protein localises to the adherens junction. The protein resides in the myofibril. It localises to the sarcomere. Its subcellular location is the z line. Functionally, involved in regulating cell migration through association with the actin cytoskeleton. Has an essential role in the maintenance of Z line and sarcomere integrity. The polypeptide is Nexilin (Homo sapiens (Human)).